A 1161-amino-acid chain; its full sequence is MAASRNASTANTNNAASTAPLRISFAKIKEPLEVPNLLALQTESFDWLLGNDAWKARVESALESGQDVPTKSGLEEIFEEISPIEDFSGSMSLTFRDHRFEPPKNSIDECKDRDFTYAAPLFVTAEFTNNETGEIKSQTVFMGDFPLMTNKGTFVINGTERVVVSQLVRSPGVYFDSSIDKTSDKDIFSAKIIPSRGAWLEMEIDKRDMVGVRIDRKRKQSVTVLLKALGWTTEQILEEFGEYESMRATLEKDHTQGQDDALLDIYRKLRPGEPPTREAAQTLLENLYFNPKRYDLAKVGRYKVNKKLGADEPLDAGVLTTDDVIATIKYLVKLHAGETETVGESGREIVVETDDIDHFGNRRIRNVGELIQNQVRTGLARMERVVRERMTTQDVEAITPQTLINIRPVVASIKEFFGTSQLSQFMDQNNPLSGLTHKRRLNALGPGGLSRERAGFEVRDVHPSHYGRMCPIETPEGPNIGLIGSLASYGRINPFGFIETPYRKVVEGQVTDDVDYLTADEEDRFVIAQANAALGDDMRFAEARVLVRRRGGEVDYVPGDDVDYMDVSPRQMVSVATAMIPFLEHDDANRALMGANMMRQAVPLIKSESPLVGTGMEYRSAADAGDVVKAEKAGVVQEVSADYITTTNDDGTYITYRLAKFSRSNQGTSVNQKVIVAEGDRIIEGQVLADGPATENGEMALGKNLLVAFMPWEGHNYEDAIILSQRLVQDDVLSSIHIEEHEVDARDTKLGPEEITRDIPNVSEEVLADLDERGIIRIGAEVVAGDILVGKVTPKGETELTPEERLLRAIFGEKAREVRDTSLKVPHGEIGKVIGVRVFDREEGDELPPGVNQLVRVYVAQKRKITDGDKLAGRHGNKGVISKINPIEDMPFLEDGTPVDIILNPLAVPSRMNPGQVLEIHLGWLASRGWDVSGLAEEWAQRLQVIGADKVEPGTNVATPVFDGAREDELAGLLQHTIPNRDGERMVLPSGKARLFDGRSGEPFPEPISVGYMYILKLHHLVDDKLHARSTGPYSMITQQPLGGKAQFGGQRFGEMEVWALEAYGAAYALQELLTIKSDDVTGRVKVYEAIVKGENIPEPGIPESFKVLIKEMQSLCLNVEVLSSDGMSIEMRDTDEDVFRAAEELGIDLSRREPSSVEEV.

This sequence belongs to the RNA polymerase beta chain family. In terms of assembly, the RNAP catalytic core consists of 2 alpha, 1 beta, 1 beta' and 1 omega subunit. When a sigma factor is associated with the core the holoenzyme is formed, which can initiate transcription. The RNAP complex including the principal sigma factor HrdB also interacts with RNA-binding protein RbpA.

It carries out the reaction RNA(n) + a ribonucleoside 5'-triphosphate = RNA(n+1) + diphosphate. Functionally, DNA-dependent RNA polymerase catalyzes the transcription of DNA into RNA using the four ribonucleoside triphosphates as substrates. The chain is DNA-directed RNA polymerase subunit beta from Streptomyces coelicolor (strain ATCC BAA-471 / A3(2) / M145).